A 147-amino-acid polypeptide reads, in one-letter code: Probable disulfide formation protein (147 aa).

Residues Asn-9–Tyr-28 form a helical membrane-spanning segment. A disulfide bond links Cys-38 and Cys-41. A run of 2 helical transmembrane segments spans residues Tyr-43–Thr-62 and Tyr-69–Leu-86. Cys-99 and Cys-106 are oxidised to a cystine. Residues Gly-115 to Phe-138 traverse the membrane as a helical segment.

The protein belongs to the DsbB family. BdbC subfamily.

It is found in the cell inner membrane. Functionally, required for disulfide bond formation in some proteins. The chain is Probable disulfide formation protein from Coxiella burnetii (strain CbuG_Q212) (Coxiella burnetii (strain Q212)).